We begin with the raw amino-acid sequence, 542 residues long: MQAKIIYALSAISALIPLGSSLLAPIEDPIVSNKYLISYIDEDDWSDRILQNQSVMNSGYIVNMGDDLECFIQNASTQLNDVLEDSNEHSNSEKTALLTKTLNQGVKTIFDKLNERCIFYQAGFWIYEYCPGIEFVQFHGRVNTKTGEIVNRDESLVYRLGKPKANVEEREFELLYDDVGYYISEIIGSGDICDVTGAERMVEIQYVCGGSNSGPSTIQWVRETKICVYEAQVTIPELCNLELLAKNEDQKNASPILCRMPAKSKIGSNSIDLITKYEPIFLGSGIYFLRPFNTDERDKLMVTDNAMSNWDEITETYYQKFGNAINKMLSLRLVSLPNGHILQPGDSCVWLAEVVDMKDRFQTTLSLNILNSQRAEIFFNKTFTFNEDNGNFLSYKIGDHGESTELGQITHSNKADINTAEIRSDEYLINTDNELFLRISKEIAEVKELLNEIVSPHEMEVIFENMRNQPNNDFELALMNKLKSSLNDDNKVEQINNARMDDDESTSHTTRDIGEAGSQTTGNTESEVTNVAAGVFIEHDEL.

Residues 1–21 (MQAKIIYALSAISALIPLGSS) form the signal peptide. 2 N-linked (GlcNAc...) asparagine glycosylation sites follow: asparagine 52 and asparagine 74. 4 disulfides stabilise this stretch: cysteine 70–cysteine 258, cysteine 117–cysteine 130, cysteine 193–cysteine 227, and cysteine 208–cysteine 239. The 127-residue stretch at 115–241 (ERCIFYQAGF…QVTIPELCNL (127 aa)) folds into the MRH domain. A mannooligosaccharide derivative contacts are provided by tryptophan 125, glutamine 137, aspartate 194, arginine 200, glutamate 223, and tyrosine 229. Residue asparagine 380 is glycosylated (N-linked (GlcNAc...) asparagine). Positions 497–528 (NARMDDDESTSHTTRDIGEAGSQTTGNTESEV) are disordered. A compositionally biased stretch (basic and acidic residues) spans 505-514 (STSHTTRDIG). A compositionally biased stretch (polar residues) spans 517 to 528 (GSQTTGNTESEV). The Prevents secretion from ER signature appears at 539–542 (HDEL).

It belongs to the OS-9 family. Homodimer. Component of the HRD1 ubiquitin ligase complex which contains the E3 ligase HRD1, its cofactors HRD3, USA1 and DER1, substrate recruiting factor YOS9 and CDC48-binding protein UBX2. Within the complex, interacts (via N-terminus) with HRD3. In ERAD-L, HRD3 and YOS9 jointly bind misfolded glycoproteins in the endoplasmic reticulum (ER) lumen. Movement of ERAD-L substrates through the ER membrane is facilitated by HRD1 and DER1 which have lateral gates facing each other and which distort the membrane region between the lateral gates, making it much thinner than a normal phospholipid bilayer. Substrates insert into the membrane as a hairpin loop with one strand interacting with DER1 and the other with HRD1. The HRD1 complex interacts with the heterotrimeric CDC48-NPL4-UFD1 ATPase complex which is recruited by UBX2 via its interaction with CDC48 and which moves ubiquitinated substrates to the cytosol for targeting to the proteasome. Interacts with KAR2 and EMP47. Interacts with misfolded ER lumenal proteins like PCR1. Interacts with the GPI-anchored proteins GAS1 and MKC7.

The protein localises to the endoplasmic reticulum membrane. Functionally, lectin involved in the quality control of the secretory pathway. As a member of the endoplasmic reticulum-associated degradation lumenal (ERAD-L) surveillance system, targets misfolded endoplasmic reticulum lumenal glycoproteins for degradation. The recognition of targets is N-glycan specific. Functions in recruiting misfolded protein substrates in conjunction with HRD3. This chain is Protein OS-9 homolog (YOS9), found in Saccharomyces cerevisiae (strain ATCC 204508 / S288c) (Baker's yeast).